A 293-amino-acid chain; its full sequence is 4-hydroxy-tetrahydrodipicolinate synthase (293 aa).

Position 44 (Thr-44) interacts with pyruvate. Tyr-132 acts as the Proton donor/acceptor in catalysis. The active-site Schiff-base intermediate with substrate is the Lys-161. Ile-205 serves as a coordination point for pyruvate.

Belongs to the DapA family. In terms of assembly, homotetramer; dimer of dimers.

It localises to the cytoplasm. It catalyses the reaction L-aspartate 4-semialdehyde + pyruvate = (2S,4S)-4-hydroxy-2,3,4,5-tetrahydrodipicolinate + H2O + H(+). It participates in amino-acid biosynthesis; L-lysine biosynthesis via DAP pathway; (S)-tetrahydrodipicolinate from L-aspartate: step 3/4. Its function is as follows. Catalyzes the condensation of (S)-aspartate-beta-semialdehyde [(S)-ASA] and pyruvate to 4-hydroxy-tetrahydrodipicolinate (HTPA). This is 4-hydroxy-tetrahydrodipicolinate synthase from Thermosipho africanus (strain TCF52B).